Reading from the N-terminus, the 189-residue chain is Putative manganese efflux pump MntP (189 aa).

Transmembrane regions (helical) follow at residues 3-23, 41-61, 65-85, 104-124, 132-152, and 167-187; these read LSATIILAFAMSMDAFAASIG, LIFGVIEAITPLIGWCIGLFA, IMEWDHWIAFSLLFILGCRMI, FWVLVTTAIATSLDAMAIGVG, IVHTAMAIGLATMIMATLGML, and IIGGIVLIGIGFNILYEHMHL.

Belongs to the MntP (TC 9.B.29) family.

The protein resides in the cell inner membrane. Its function is as follows. Probably functions as a manganese efflux pump. The chain is Putative manganese efflux pump MntP from Yersinia pseudotuberculosis serotype O:1b (strain IP 31758).